Here is a 343-residue protein sequence, read N- to C-terminus: 4-hydroxy-2-oxovalerate aldolase 2 (343 aa).

The 251-residue stretch at 5 to 255 folds into the Pyruvate carboxyltransferase domain; it reads ITIVDTTLRD…DTGVDLFPLI (251 aa). Residues 13 to 14, serine 167, and histidine 194 each bind substrate; that span reads RD. Residue aspartate 14 coordinates Mn(2+). Mn(2+) is bound by residues histidine 194 and histidine 196. Tyrosine 285 contributes to the substrate binding site.

It belongs to the 4-hydroxy-2-oxovalerate aldolase family.

The catalysed reaction is (S)-4-hydroxy-2-oxopentanoate = acetaldehyde + pyruvate. The chain is 4-hydroxy-2-oxovalerate aldolase 2 from Rhodococcus jostii (strain RHA1).